The sequence spans 430 residues: DNA-binding protein cre-1 (430 aa).

The span at 1-19 shows a compositional bias: polar residues; that stretch reads MQRVQSAVDFSNLLNPSES. Disordered regions lie at residues 1 to 77, 97 to 187, 265 to 340, and 357 to 430; these read MQRV…LPRP, IRTH…PHSY, SRSH…RNLS, and LDGQ…MDRL. Positions 30-46 are enriched in low complexity; sequence PRQQTAQPQQQQQQPQP. C2H2-type zinc fingers lie at residues 78–100 and 106–130; these read YKCPLCDKAFHRLEHQTRHIRTH and HACQFPGCSKKFSRSDELTRHSRIH. Residues 97–106 show a composition bias toward basic and acidic residues; that stretch reads IRTHTGEKPH. 2 stretches are compositionally biased toward polar residues: residues 130 to 147 and 175 to 187; these read HSNPNSRRGNKGQQQQQH and AMSSPNVSPPHSY. A compositionally biased stretch (basic and acidic residues) spans 268–277; sequence HSHEDHDDHY. The segment covering 289–303 has biased composition (low complexity); the sequence is PNSPNSTAPSSPTFS. Positions 412–422 are enriched in polar residues; sequence SVRNSSSTSLS.

The protein belongs to the creA/MIG C2H2-type zinc-finger protein family.

Its subcellular location is the nucleus. In terms of biological role, involved in carbon catabolite repression. Represses the transcription of a number of genes by binding to a GC-rich region in their promoter. This Neurospora crassa (strain ATCC 24698 / 74-OR23-1A / CBS 708.71 / DSM 1257 / FGSC 987) protein is DNA-binding protein cre-1 (cre-1).